Reading from the N-terminus, the 206-residue chain is TPR repeat-containing protein YrrB (206 aa).

TPR repeat units follow at residues 1-23 (MQEGDYEKAAEAFTKAIEENKED), 24-57 (AIPYINFANLLSSVNELERALAFYDKALELDSSA), 59-91 (TAYYGAGNVYVVKEMYKEAKDMFEKALRAGMEN), 93-125 (DLFYMLGTVLVKLEQPKLALPYLQRAVELNEND), 127-159 (EARFQFGMCLANEGMLDEALSQFAAVTEQDPGH), and 160-193 (ADAFYNAGVTYAYKENREKALEMLDKAIDIQPDH).

As to quaternary structure, monomer.

Its function is as follows. Could be an interacting mediator in the complex formation among RNA sulfuration components, RNA processing components, and aminoacyl-tRNA synthetases. This is TPR repeat-containing protein YrrB (yrrB) from Bacillus subtilis (strain 168).